The sequence spans 864 residues: Structure-specific endonuclease subunit SLX4 (864 aa).

Over residues 35-54 (SPLSLPSPTSLLDFLSTSTS) the composition is skewed to low complexity. 7 disordered regions span residues 35–72 (SPLS…GKEV), 89–113 (VVSG…PGNA), 160–193 (KANQ…HIND), 288–318 (GLSD…NPPK), 348–382 (LSDE…EKKN), 413–432 (ANGH…HISN), and 625–771 (KTSN…ETLP). Basic and acidic residues predominate over residues 58–72 (ARSDTDGDKTQGKEV). Polar residues-rich tracts occupy residues 160–169 (KANQTVSLQP) and 289–306 (LSDS…SATS). Positions 307–317 (KPRRVKAKNPP) are enriched in basic residues. A compositionally biased stretch (polar residues) spans 659 to 668 (SIPQTATTQV). Low complexity predominate over residues 683–695 (VPVPSRRSTSTSK). Over residues 743 to 771 (PESFNLPTTPLTIRSGKIPSTGTASETLP) the composition is skewed to polar residues.

This sequence belongs to the SLX4 family. In terms of assembly, forms a heterodimer with SLX1. Post-translationally, phosphorylated in response to DNA damage.

It localises to the nucleus. In terms of biological role, regulatory subunit of the SLX1-SLX4 structure-specific endonuclease that resolves DNA secondary structures generated during DNA repair and recombination. Has endonuclease activity towards branched DNA substrates, introducing single-strand cuts in duplex DNA close to junctions with ss-DNA. The protein is Structure-specific endonuclease subunit SLX4 of Paracoccidioides brasiliensis (strain Pb03).